The sequence spans 37 residues: Somatostatin-37 (37 aa).

Positions 1–2 are excised as a propeptide; that stretch reads AL. A disulfide bridge links cysteine 26 with cysteine 37.

The protein belongs to the somatostatin family.

The protein resides in the secreted. Functionally, somatostatin inhibits the release of somatotropin. This Petromyzon marinus (Sea lamprey) protein is Somatostatin-37 (sst).